We begin with the raw amino-acid sequence, 367 residues long: Serine/threonine-protein kinase Sgk2 (367 aa).

The segment at 1–28 (MASSPVGVPSPQPSRANGNINLGPSANP) is disordered. Ser10 bears the Phosphoserine mark. The segment covering 15-28 (RANGNINLGPSANP) has biased composition (polar residues). The 258-residue stretch at 35 to 292 (FDFLKVIGKG…FLDIKNHMFF (258 aa)) folds into the Protein kinase domain. ATP is bound by residues 41–49 (IGKGNYGKV) and Lys64. Residues 68 to 78 (KKSILKNKEQN) carry the Nuclear localization signal motif. Residue Asp159 is the Proton acceptor of the active site. Position 193 is a phosphothreonine; by PDPK1 (Thr193). Residues 293-367 (SPINWDDLYH…AQDDDDILDS (75 aa)) form the AGC-kinase C-terminal domain. Residues Ser334 and Ser356 each carry the phosphoserine modification. Tyr357 is modified (phosphotyrosine).

This sequence belongs to the protein kinase superfamily. AGC Ser/Thr protein kinase family. Post-translationally, activated by phosphorylation on Ser-356 by an unknown kinase (may be mTORC2 but not confirmed), transforming it into a substrate for PDPK1 which then phosphorylates it on Thr-193.

The protein localises to the cytoplasm. The protein resides in the nucleus. It catalyses the reaction L-seryl-[protein] + ATP = O-phospho-L-seryl-[protein] + ADP + H(+). It carries out the reaction L-threonyl-[protein] + ATP = O-phospho-L-threonyl-[protein] + ADP + H(+). Two specific sites, one in the kinase domain (Thr-193) and the other in the C-terminal regulatory region (Ser-356), need to be phosphorylated for its full activation. Its function is as follows. Serine/threonine-protein kinase which is involved in the regulation of a wide variety of ion channels, membrane transporters, cell growth, survival and proliferation. Up-regulates Na(+) channels: SCNN1A/ENAC, K(+) channels: KCNA3/Kv1.3, KCNE1 and KCNQ1, amino acid transporter: SLC6A19, glutamate transporter: SLC1A6/EAAT4, glutamate receptors: GRIA1/GLUR1 and GRIK2/GLUR6, Na(+)/H(+) exchanger: SLC9A3/NHE3, and the Na(+)/K(+) ATPase. The protein is Serine/threonine-protein kinase Sgk2 (Sgk2) of Mus musculus (Mouse).